Here is a 99-residue protein sequence, read N- to C-terminus: PE family immunomodulator PE35 (99 aa).

Residues 1–90 form the PE domain; sequence MEKMSHDPIA…DVARTYSQID (90 aa).

Belongs to the mycobacterial PE family. As to quaternary structure, interacts with PPE68. PE35/PPE68 complex interacts with human TLR2.

It localises to the secreted. The protein resides in the cell surface. In terms of biological role, plays a major role in RD1-associated pathogenesis, and may contribute to the establishment and maintenance of M.tuberculosis infection. Together with PPE68, stimulates the secretion of IL-10 and MCP-1 from human macrophages, via the interaction with human Toll-like receptor 2 (TLR2). This is PE family immunomodulator PE35 (PE35) from Mycobacterium tuberculosis (strain ATCC 25618 / H37Rv).